The sequence spans 218 residues: MEPGFWHEKWQQQLIGFHQQDINPFLVKYWQTLALPADAKVFVPLCGKSLDMCFLAEQGHQVIGCELNELAVQQFFEENQLPMNQSAEGEHQHYQTEQVSLYQGDIFTLPQSITAQVNGFYDRAALIAWPESMRTQYAKQLAQLLPSGSVGLLVTLDYPQETLSGPPFAVSPTWVETHLSDDFEIQALACQDVLADNPRFVKKEVPWLNEAVYLLRRK.

4 residues coordinate S-adenosyl-L-methionine: Trp10, Leu45, Glu66, and Arg123.

Belongs to the class I-like SAM-binding methyltransferase superfamily. TPMT family.

It is found in the cytoplasm. The enzyme catalyses S-adenosyl-L-methionine + a thiopurine = S-adenosyl-L-homocysteine + a thiopurine S-methylether.. This Shewanella sp. (strain MR-4) protein is Thiopurine S-methyltransferase.